A 734-amino-acid polypeptide reads, in one-letter code: Photosystem I P700 chlorophyll a apoprotein A2 (734 aa).

Helical transmembrane passes span 46–69, 135–158, 175–199, 273–291, 330–353, 369–395, 417–439, and 517–535; these read IFAS…FHVA, LYTG…LHLQ, LNHH…HVAI, IAHH…GHMY, IHFQ…QHMY, AALY…IFFI, AIIS…LYVH, and FLVH…LILV. Cysteine 559 and cysteine 568 together coordinate [4Fe-4S] cluster. The next 2 helical transmembrane spans lie at 575–596 and 643–665; these read AFYL…YWHW and LSVW…MFLI. Chlorophyll a contacts are provided by histidine 654, methionine 662, and tyrosine 670. Phylloquinone is bound at residue tryptophan 671. A helical membrane pass occupies residues 707 to 727; that stretch reads LVGLAHFSVGYIFTYAAFLIA.

Belongs to the PsaA/PsaB family. The PsaA/B heterodimer binds the P700 chlorophyll special pair and subsequent electron acceptors. PSI consists of a core antenna complex that captures photons, and an electron transfer chain that converts photonic excitation into a charge separation. The eukaryotic PSI reaction center is composed of at least 11 subunits. It depends on P700 is a chlorophyll a/chlorophyll a' dimer, A0 is one or more chlorophyll a, A1 is one or both phylloquinones and FX is a shared 4Fe-4S iron-sulfur center. as a cofactor.

The protein localises to the plastid. The protein resides in the chloroplast thylakoid membrane. The enzyme catalyses reduced [plastocyanin] + hnu + oxidized [2Fe-2S]-[ferredoxin] = oxidized [plastocyanin] + reduced [2Fe-2S]-[ferredoxin]. Functionally, psaA and PsaB bind P700, the primary electron donor of photosystem I (PSI), as well as the electron acceptors A0, A1 and FX. PSI is a plastocyanin-ferredoxin oxidoreductase, converting photonic excitation into a charge separation, which transfers an electron from the donor P700 chlorophyll pair to the spectroscopically characterized acceptors A0, A1, FX, FA and FB in turn. Oxidized P700 is reduced on the lumenal side of the thylakoid membrane by plastocyanin. The sequence is that of Photosystem I P700 chlorophyll a apoprotein A2 from Agrostis stolonifera (Creeping bentgrass).